The following is a 174-amino-acid chain: Small ribosomal subunit protein uS5 (174 aa).

An S5 DRBM domain is found at 19 to 82 (LREKMIAVNR…EQARRGMFKV (64 aa)).

The protein belongs to the universal ribosomal protein uS5 family. Part of the 30S ribosomal subunit. Contacts proteins S4 and S8.

Functionally, with S4 and S12 plays an important role in translational accuracy. Located at the back of the 30S subunit body where it stabilizes the conformation of the head with respect to the body. The chain is Small ribosomal subunit protein uS5 from Bordetella bronchiseptica (strain ATCC BAA-588 / NCTC 13252 / RB50) (Alcaligenes bronchisepticus).